The primary structure comprises 568 residues: Potassium-transporting ATPase potassium-binding subunit (568 aa).

Helical transmembrane passes span 7–27 (ITIGIFFLCVLALTRPLGGFL), 65–85 (HYALALLSFKIVCFVAVYAIL), 136–156 (GLTVQNFVSAAAGIAVAAAII), 179–199 (LYVLLPISVVLSLFYVFEGIP), 254–274 (LTNFVEMISIFAIGAGLTNVF), 285–305 (WAVFSAMSVLFFVGVTAVYWA), 332–352 (FGVAASALFAAVTTDASCGAV), 354–374 (AMHESFLPLGGMVPLINMMLG), 377–397 (IIGGVGAGLYGFILFAIIAVF), 423–443 (MLAVLCLPLVMLGFTAVAVVV), 487–507 (ITLGIGMMIGRFFVIVPALAI), and 530–550 (LFIGLVAGVIIIVGGLTFLPA).

The protein belongs to the KdpA family. As to quaternary structure, the system is composed of three essential subunits: KdpA, KdpB and KdpC.

The protein localises to the cell inner membrane. Functionally, part of the high-affinity ATP-driven potassium transport (or Kdp) system, which catalyzes the hydrolysis of ATP coupled with the electrogenic transport of potassium into the cytoplasm. This subunit binds the periplasmic potassium ions and delivers the ions to the membrane domain of KdpB through an intramembrane tunnel. In Granulibacter bethesdensis (strain ATCC BAA-1260 / CGDNIH1), this protein is Potassium-transporting ATPase potassium-binding subunit.